The following is a 153-amino-acid chain: IAA acetyltransferase (153 aa).

In terms of domain architecture, N-acetyltransferase spans 4-153 (VTIARESPLQ…PLSLFMEKPL (150 aa)).

Its function is as follows. Participates in the tryptophan-dependent indole-3-acetic acid production, which is a phytohormone released by A.brasilense. In Azospirillum brasilense, this protein is IAA acetyltransferase.